Reading from the N-terminus, the 78-residue chain is Signal peptidase complex subunit 1 (78 aa).

The Cytoplasmic portion of the chain corresponds to 1 to 18 (MNYLEGTIDFAGQLRCQK). The helical transmembrane segment at 19-38 (YMNYGLCTSAVISYIYGYLV) threads the bilayer. The Lumenal segment spans residues 39-42 (QDSY). A helical transmembrane segment spans residues 43 to 63 (CVIKLFLILASLVALVCLPAW). The Cytoplasmic segment spans residues 64–78 (SMYNKNPLKFQKKKE).

It belongs to the SPCS1 family. In terms of assembly, component of the signal peptidase complex (SPC) composed of a catalytic subunit sec11 and three accessory subunits spc1, spc2 and spc3. The complex induces a local thinning of the ER membrane which is used to measure the length of the signal peptide (SP) h-region of protein substrates. This ensures the selectivity of the complex towards h-regions shorter than 18-20 amino acids. SPC associates with the translocon complex.

The protein localises to the endoplasmic reticulum membrane. In terms of biological role, component of the signal peptidase complex (SPC) which catalyzes the cleavage of N-terminal signal sequences from nascent proteins as they are translocated into the lumen of the endoplasmic reticulum. Dispensable for SPC enzymatic activity. This chain is Signal peptidase complex subunit 1, found in Schizosaccharomyces pombe (strain 972 / ATCC 24843) (Fission yeast).